Reading from the N-terminus, the 104-residue chain is Large ribosomal subunit protein bL21c (104 aa).

Belongs to the bacterial ribosomal protein bL21 family. Part of the 50S ribosomal subunit.

It is found in the plastid. It localises to the chloroplast. Functionally, this protein binds to 23S rRNA. This is Large ribosomal subunit protein bL21c from Guillardia theta (Cryptophyte).